Consider the following 1017-residue polypeptide: A-type ATP synthase subunit A (1017 aa).

Residues 396-529 form the DOD-type homing endonuclease domain; it reads FLGYLIADGT…FSYLLAKLGI (134 aa).

Belongs to the ATPase alpha/beta chains family. As to quaternary structure, has multiple subunits with at least A(3), B(3), C, D, E, F, H, I and proteolipid K(x). Post-translationally, this protein undergoes a protein self splicing that involves a post-translational excision of the VDE intervening region (intein) followed by peptide ligation.

The protein localises to the cell membrane. The catalysed reaction is ATP + H2O + 4 H(+)(in) = ADP + phosphate + 5 H(+)(out). In terms of biological role, component of the A-type ATP synthase that produces ATP from ADP in the presence of a proton gradient across the membrane. The A chain is the catalytic subunit. The chain is A-type ATP synthase subunit A from Pyrococcus abyssi (strain GE5 / Orsay).